The sequence spans 262 residues: Membrane protein US15 (262 aa).

The next 7 helical transmembrane spans lie at 46 to 66 (GAVG…CYAA), 77 to 97 (CLTE…VIFI), 108 to 128 (IGVL…ICLC), 133 to 153 (LVIS…GVAL), 163 to 183 (QIVV…VVIL), 186 to 206 (GWSW…CLAV), and 226 to 246 (LLAA…VLRI).

It belongs to the HHV-5 US12 protein family.

It localises to the host membrane. This is Membrane protein US15 (US15) from Human cytomegalovirus (strain Merlin) (HHV-5).